Here is a 393-residue protein sequence, read N- to C-terminus: Bone morphogenetic protein 2 (393 aa).

Residues 1 to 19 (MVAGTRCLLVLLLPQVLLG) form the signal peptide. Positions 20 to 279 (GAAGLIPELG…GHPLHKREKR (260 aa)) are cleaved as a propeptide — cleaved by PCSK5. S85 bears the Phosphoserine mark. Residues N133, N161, and N197 are each glycosylated (N-linked (GlcNAc...) asparagine). Residues 268–290 (GKGHPLHKREKRQAKHKQRKRLK) are disordered. Residues 271–290 (HPLHKREKRQAKHKQRKRLK) are compositionally biased toward basic residues. Disulfide bonds link C293-C358, C322-C390, and C326-C392. N335 carries an N-linked (GlcNAc...) asparagine glycan.

The protein belongs to the TGF-beta family. In terms of assembly, homodimer; disulfide-linked. Interacts with SOSTDC1. Interacts with GREM2, RGMA, RGMB and RGMC. Interacts with ASPN. Interacts with MAFP5. Interacts with FBN1 (via N-terminal domain) and FBN2. Interacts with type I receptor BMPR1A. Interacts with type II receptor BMPR2. Interacts with SCUBE3. Interacts with TNFAIP6 (primarily via Link domain); this interaction is inhibited by hyaluronan. Interacts with ERFE. Interacts with BMPR1A/ALK3; the interaction may induce HAMP expression. Forms heterodimers with BMP6 in vitro; the heterodimer then binds to its receptor BMPR1A /ALK3 and may induce HAMP expression. Interacts with TGFBR3. As to expression, expressed in femur, calvaria, trachea, lung and ovary.

It is found in the secreted. Growth factor of the TGF-beta superfamily that plays essential roles in many developmental processes, including cardiogenesis, neurogenesis, and osteogenesis. Induces cartilage and bone formation. Initiates the canonical BMP signaling cascade by associating with type I receptor BMPR1A and type II receptor BMPR2. Once all three components are bound together in a complex at the cell surface, BMPR2 phosphorylates and activates BMPR1A. In turn, BMPR1A propagates signal by phosphorylating SMAD1/5/8 that travel to the nucleus and act as activators and repressors of transcription of target genes. Also acts to promote expression of HAMP, via the interaction with its receptor BMPR1A/ALK3. Can also signal through non-canonical pathways such as ERK/MAP kinase signaling cascade that regulates osteoblast differentiation. Also stimulates the differentiation of myoblasts into osteoblasts via the EIF2AK3-EIF2A-ATF4 pathway by stimulating EIF2A phosphorylation which leads to increased expression of ATF4 which plays a central role in osteoblast differentiation. Acts as a positive regulator of odontoblast differentiation during mesenchymal tooth germ formation, expression is repressed during the bell stage by MSX1-mediated inhibition of CTNNB1 signaling. This Rattus norvegicus (Rat) protein is Bone morphogenetic protein 2 (Bmp2).